The sequence spans 22 residues: Mu-conotoxin MIIIA (22 aa).

The residue at position 1 (Gln-1) is a Pyrrolidone carboxylic acid. Disulfide bonds link Cys-3–Cys-15, Cys-4–Cys-21, and Cys-10–Cys-22. A Cysteine amide modification is found at Cys-22.

Belongs to the conotoxin M superfamily. As to expression, expressed by the venom duct.

Its subcellular location is the secreted. Functionally, mu-conotoxins block voltage-gated sodium channels (Nav). This synthetic toxin potently blocks rNav1.3/SCN3A. It also moderately blocks rNav1.1/SCN1A, rNav1.2/SCN2A, rNav1.4/SCN4A, mNav1.6/SCN8A, and Nav1.7/SCN9A. sodium channels. This block is very slowly reversible. The chain is Mu-conotoxin MIIIA from Conus magus (Magical cone).